Here is a 292-residue protein sequence, read N- to C-terminus: GID complex substrate-recognition subunit 10 (292 aa).

Belongs to the GID4/VID24 family. In terms of assembly, substrate-recognition component of the GID/CTLH ubiquitin ligase complex. In the absence of stress, the complex exists as an inactive anticipatory complex (GID(Ant)), composed of VID30/GID1, the E3 ubiquitin-ligase RMD5/GID2, VID28/GID5, GID8, and the RING-like subunit FYV10/GID9, awaiting a substrate receptor to form the active E3 ligase complex. When cells are shifted to glucose-containing medium, the substrate receptor VID24/GID4 is induced and becomes part of the complex, named GID(SR4). Under osmotic or heat stress, the substrate receptor GID10 is induced and becomes part of the complex, named GID(SR10). Interacts with proteins that have an N-terminal Pro/N-degron, including ART2.

Substrate-recognition component of the GID E3 ligase complex recruiting N termini and catalyzing ubiquitination of proteins targeted for degradation. GID E3 is regulated through assembly with interchangeable N-degron-binding substrate receptors induced by distinct environmental perturbations. Required for the adaptation to osmotic or heat stress. Required for the regulation of protein levels of the adapter protein ART2, a component of the ART-Rsp5 ubiquitin ligase pathway, part of the plasma membrane quality control. Specific for substrates with an N-terminal Pro (Pro/N-degron), including ART2. Has high affinity for the N-terminal sequence Pro-Tyr-Ile-Thr, and also recognizes nonproline residues such as Met-Tyr-Ile-Thr-Val or Val-Cys-Phe-His. The polypeptide is GID complex substrate-recognition subunit 10 (Saccharomyces cerevisiae (strain ATCC 204508 / S288c) (Baker's yeast)).